A 126-amino-acid polypeptide reads, in one-letter code: FCS-Like Zinc finger 7 (126 aa).

The FLZ-type zinc finger occupies 72–116; it reads SFLVNCGFCKRGLAPGRDIYMYKGDAAFCSIECREQQMEHDEGKT.

It belongs to the FLZ family. In terms of assembly, interacts with KIN10 and KIN11 via its FLZ-type zinc finger domain. Interacts with KINB3 via its N-terminal part. Forms homodimer and heterodimer with FLZ1, FLZ2 and FLZ15 in vitro.

Its subcellular location is the cytoplasm. It is found in the nucleus. In terms of biological role, may act as an adapter to facilitate the interaction of SnRK1 complex with effector proteins, conferring tissue- and stimulus-type specific differences in the SnRK1 regulation pathway. The chain is FCS-Like Zinc finger 7 from Arabidopsis thaliana (Mouse-ear cress).